The chain runs to 249 residues: MIRILVSNDDGVNAPGIKALTEALAEIATVLTVGPDRNCSGASNSLTLTNPLRINRLDNGYISVHGTPTDCVHLAIRELYDGEPDMVVSGINAGANMGDDTLYSGTVAAAMEGRFLGFPAVAISLNGRKFEHYQSAAVYARRIVQGLLAQPLAKDQILNVNVPDLPLDQIKGIKVTRLGARHKAEGIVRTQDPAGREIFWLGPPGQEQDATDGTDFHAVANGYVSITPLTVDLTAYGQLTALQNWVDKI.

The a divalent metal cation site is built by aspartate 9, aspartate 10, serine 40, and asparagine 92.

Belongs to the SurE nucleotidase family. Requires a divalent metal cation as cofactor.

It is found in the cytoplasm. It catalyses the reaction a ribonucleoside 5'-phosphate + H2O = a ribonucleoside + phosphate. Its function is as follows. Nucleotidase that shows phosphatase activity on nucleoside 5'-monophosphates. This chain is 5'-nucleotidase SurE, found in Shewanella baltica (strain OS195).